A 379-amino-acid chain; its full sequence is Carbamoyl phosphate synthase small chain (379 aa).

A CPSase region spans residues 1–189 (MSKLALLVLE…GLPEAKDDSE (189 aa)). L-glutamine contacts are provided by serine 47, glycine 241, and glycine 243. Positions 193-379 (HVVAYDFGAK…FIELIKKHSA (187 aa)) constitute a Glutamine amidotransferase type-1 domain. The Nucleophile role is filled by cysteine 269. L-glutamine-binding residues include leucine 270, glutamine 273, asparagine 311, glycine 313, and phenylalanine 314. Residues histidine 353 and glutamate 355 contribute to the active site.

This sequence belongs to the CarA family. In terms of assembly, composed of two chains; the small (or glutamine) chain promotes the hydrolysis of glutamine to ammonia, which is used by the large (or ammonia) chain to synthesize carbamoyl phosphate. Tetramer of heterodimers (alpha,beta)4.

It carries out the reaction hydrogencarbonate + L-glutamine + 2 ATP + H2O = carbamoyl phosphate + L-glutamate + 2 ADP + phosphate + 2 H(+). It catalyses the reaction L-glutamine + H2O = L-glutamate + NH4(+). It participates in amino-acid biosynthesis; L-arginine biosynthesis; carbamoyl phosphate from bicarbonate: step 1/1. It functions in the pathway pyrimidine metabolism; UMP biosynthesis via de novo pathway; (S)-dihydroorotate from bicarbonate: step 1/3. Its function is as follows. Small subunit of the glutamine-dependent carbamoyl phosphate synthetase (CPSase). CPSase catalyzes the formation of carbamoyl phosphate from the ammonia moiety of glutamine, carbonate, and phosphate donated by ATP, constituting the first step of 2 biosynthetic pathways, one leading to arginine and/or urea and the other to pyrimidine nucleotides. The small subunit (glutamine amidotransferase) binds and cleaves glutamine to supply the large subunit with the substrate ammonia. In Vibrio parahaemolyticus serotype O3:K6 (strain RIMD 2210633), this protein is Carbamoyl phosphate synthase small chain.